Reading from the N-terminus, the 120-residue chain is uncharacterized protein (120 aa).

This is an uncharacterized protein from Escherichia coli O6:H1 (strain CFT073 / ATCC 700928 / UPEC).